A 139-amino-acid polypeptide reads, in one-letter code: Oocyte zinc finger protein XlCOF14 (139 aa).

5 consecutive C2H2-type zinc fingers follow at residues 6–28 (FICS…SNVH), 33–55 (FPCT…QKIH), 61–83 (HKCT…HLSH), 89–111 (FSCF…QLSH), and 117–139 (FVCS…CHIH).

This sequence belongs to the krueppel C2H2-type zinc-finger protein family.

Its subcellular location is the nucleus. In terms of biological role, may be involved in transcriptional regulation. The polypeptide is Oocyte zinc finger protein XlCOF14 (Xenopus laevis (African clawed frog)).